The chain runs to 629 residues: tRNA uridine 5-carboxymethylaminomethyl modification enzyme MnmG (629 aa).

Residue 14-19 coordinates FAD; the sequence is GAGHAG. 274–288 contributes to the NAD(+) binding site; sequence GPRYCPSIEDKVVRF.

Belongs to the MnmG family. As to quaternary structure, homodimer. Heterotetramer of two MnmE and two MnmG subunits. It depends on FAD as a cofactor.

Its subcellular location is the cytoplasm. NAD-binding protein involved in the addition of a carboxymethylaminomethyl (cmnm) group at the wobble position (U34) of certain tRNAs, forming tRNA-cmnm(5)s(2)U34. This chain is tRNA uridine 5-carboxymethylaminomethyl modification enzyme MnmG, found in Xylella fastidiosa (strain 9a5c).